The following is a 74-amino-acid chain: Ubiquitin-like protein FUBI (74 aa).

Belongs to the ubiquitin family.

The sequence is that of Ubiquitin-like protein FUBI (FAU) from Pongo abelii (Sumatran orangutan).